The primary structure comprises 143 residues: Cofilin (143 aa).

Residues 5–137 (GVAVSDEALK…AYESVLEKIS (133 aa)) enclose the ADF-H domain.

It belongs to the actin-binding proteins ADF family.

It localises to the cytoplasm. Its subcellular location is the cytoskeleton. The protein resides in the nucleus matrix. Its function is as follows. Controls reversibly actin polymerization and depolymerization in a pH-sensitive manner. It has the ability to bind G- and F-actin in a 1:1 ratio of cofilin to actin. Binding to F-actin is regulated by tropomyosin. It is the major component of intranuclear and cytoplasmic actin rods. Required for accumulation of actin at the cell division site via depolymerizing actin at the cell ends. In association with myosin II has a role in the assembly of the contractile ring via severing actin filaments. Involved in the maintenance of the contractile ring once formed. In association with profilin and capping protein, has a role in the mitotic reorganization of the actin cytoskeleton. In Ogataea parapolymorpha (strain ATCC 26012 / BCRC 20466 / JCM 22074 / NRRL Y-7560 / DL-1) (Yeast), this protein is Cofilin (COF1).